Here is a 1819-residue protein sequence, read N- to C-terminus: U3 small nucleolar RNA-associated protein 10 (1819 aa).

The stretch at 583 to 620 is one HEAT 1 repeat; it reads LDFQAILPFLLVALADPSERIRREAAAALAAIGGIYKK. 2 helical membrane passes run 945-965 and 1001-1021; these read IQSGMSYLLSLTLGSLLAIVN and ALLLVSGLSVIAPELVLHSVM. HEAT repeat units lie at residues 1045–1082, 1269–1306, 1313–1351, and 1775–1812; these read QTIDQVVPALIQSLRNQKRDVVSGTSELLLSFTAAFEH, LTLVDFLDTIEVLLQRPSDELRRKVLRLLEGRLRQNPE, IRVLDFLPTLVDIVRSSPDILLKHAAVACIDRIAEKYGK, and ALLPEMLPYISELMEDEDENVEREVRKWVKQIENVLGE.

Belongs to the HEATR1/UTP10 family. As to quaternary structure, component of the ribosomal small subunit (SSU) processome.

The protein resides in the nucleus. The protein localises to the nucleolus. Its subcellular location is the membrane. Functionally, involved in nucleolar processing of pre-18S ribosomal RNA. Involved in ribosome biosynthesis. The polypeptide is U3 small nucleolar RNA-associated protein 10 (Aspergillus clavatus (strain ATCC 1007 / CBS 513.65 / DSM 816 / NCTC 3887 / NRRL 1 / QM 1276 / 107)).